The following is a 483-amino-acid chain: Glutamate--tRNA ligase (483 aa).

The 'HIGH' region motif lies at 11-21 (PSPTGHLHIGN). Positions 108, 110, 135, and 137 each coordinate Zn(2+). A 'KMSKS' region motif is present at residues 252-256 (KLSKR). Lys-255 contributes to the ATP binding site.

Belongs to the class-I aminoacyl-tRNA synthetase family. Glutamate--tRNA ligase type 1 subfamily. As to quaternary structure, monomer. Zn(2+) is required as a cofactor.

It is found in the cytoplasm. It catalyses the reaction tRNA(Glu) + L-glutamate + ATP = L-glutamyl-tRNA(Glu) + AMP + diphosphate. Catalyzes the attachment of glutamate to tRNA(Glu) in a two-step reaction: glutamate is first activated by ATP to form Glu-AMP and then transferred to the acceptor end of tRNA(Glu). This is Glutamate--tRNA ligase from Bacillus pumilus (strain SAFR-032).